Consider the following 405-residue polypeptide: 8-amino-7-oxononanoate synthase 1 (405 aa).

R29 contacts substrate. Position 116-117 (116-117 (GY)) interacts with pyridoxal 5'-phosphate. H141 lines the substrate pocket. Positions 187, 215, and 247 each coordinate pyridoxal 5'-phosphate. Position 250 is an N6-(pyridoxal phosphate)lysine (K250). Residue T368 participates in substrate binding.

Belongs to the class-II pyridoxal-phosphate-dependent aminotransferase family. BioF subfamily. Homodimer. The cofactor is pyridoxal 5'-phosphate.

The catalysed reaction is 6-carboxyhexanoyl-[ACP] + L-alanine + H(+) = (8S)-8-amino-7-oxononanoate + holo-[ACP] + CO2. It functions in the pathway cofactor biosynthesis; biotin biosynthesis. Catalyzes the decarboxylative condensation of pimeloyl-[acyl-carrier protein] and L-alanine to produce 8-amino-7-oxononanoate (AON), [acyl-carrier protein], and carbon dioxide. This chain is 8-amino-7-oxononanoate synthase 1, found in Polaromonas sp. (strain JS666 / ATCC BAA-500).